We begin with the raw amino-acid sequence, 116 residues long: Protein BIC2 (116 aa).

2 disordered regions span residues Met1 to Pro33 and Asp95 to Cys116.

It localises to the nucleus. Regulates the blue-light dependent dimerization of CRY2 and formation of photobodies. Inhibits CRY phosphorylation. This Arabidopsis thaliana (Mouse-ear cress) protein is Protein BIC2.